A 577-amino-acid chain; its full sequence is ATP-dependent zinc metalloprotease FtsH (577 aa).

The Cytoplasmic segment spans residues 1–3 (MKK). A helical membrane pass occupies residues 4–24 (LYWIILIAVVLACSGILMSLH). Residues 25 to 98 (LSVTKEEMTY…IKVDNSDSYS (74 aa)) are Extracellular-facing. Residues 99–119 (ATKVIQIILIITVGTGVFLFI) traverse the membrane as a helical segment. At 120-577 (RTSGGKDKPL…IDRICLKEAV (458 aa)) the chain is on the cytoplasmic side. 186-193 (GPPGTGKT) contacts ATP. His409 lines the Zn(2+) pocket. The active site involves Glu410. Zn(2+) is bound by residues His413 and Asp487.

It in the central section; belongs to the AAA ATPase family. This sequence in the C-terminal section; belongs to the peptidase M41 family. As to quaternary structure, homohexamer. Zn(2+) is required as a cofactor.

The protein resides in the cell membrane. Acts as a processive, ATP-dependent zinc metallopeptidase for both cytoplasmic and membrane proteins. Plays a role in the quality control of integral membrane proteins. The protein is ATP-dependent zinc metalloprotease FtsH of Lachnoclostridium phytofermentans (strain ATCC 700394 / DSM 18823 / ISDg) (Clostridium phytofermentans).